The sequence spans 203 residues: Large ribosomal subunit protein bL25 (203 aa).

This sequence belongs to the bacterial ribosomal protein bL25 family. CTC subfamily. Part of the 50S ribosomal subunit; part of the 5S rRNA/L5/L18/L25 subcomplex. Contacts the 5S rRNA. Binds to the 5S rRNA independently of L5 and L18.

Its function is as follows. This is one of the proteins that binds to the 5S RNA in the ribosome where it forms part of the central protuberance. The polypeptide is Large ribosomal subunit protein bL25 (Xanthobacter autotrophicus (strain ATCC BAA-1158 / Py2)).